A 179-amino-acid chain; its full sequence is Arginine repressor (179 aa).

It belongs to the ArgR family.

It localises to the cytoplasm. Its pathway is amino-acid biosynthesis; L-arginine biosynthesis [regulation]. Functionally, regulates arginine biosynthesis genes. The polypeptide is Arginine repressor (Renibacterium salmoninarum (strain ATCC 33209 / DSM 20767 / JCM 11484 / NBRC 15589 / NCIMB 2235)).